Reading from the N-terminus, the 430-residue chain is Probable acetate kinase (430 aa).

Asn12 contributes to the Mg(2+) binding site. Lys19 lines the ATP pocket. Arg100 contacts substrate. Residue Asp159 is the Proton donor/acceptor of the active site. 220–224 provides a ligand contact to ATP; it reads HLGSG. Glu416 contacts Mg(2+).

Belongs to the acetokinase family. Requires Mg(2+) as cofactor.

It catalyses the reaction acetate + ATP = acetyl phosphate + ADP. The protein operates within metabolic intermediate biosynthesis; acetyl-CoA biosynthesis; acetyl-CoA from acetate: step 1/2. In Cryptococcus neoformans var. neoformans serotype D (strain B-3501A) (Filobasidiella neoformans), this protein is Probable acetate kinase.